The primary structure comprises 845 residues: Synaptonemal complex protein 1 (845 aa).

Positions 59 to 215 (ETRQVYVDLN…YQLTEEKEAQ (157 aa)) are interaction with SYCE3. 2 coiled-coil regions span residues 64–211 (YVDL…LTEE) and 244–544 (LRTE…EIEV). The interval 550–644 (EKLLGEVEKA…VSLKKQLEIE (95 aa)) is required for pH-induced assembly of C-terminal ends into antiparallel tetramers. Residues 553–556 (LGEV) carry the Nuclear localization signal motif. Positions 620–663 (KTALETELSNIRNELVSLKKQLEIEREEKEKLKLEKENTAILKD) form a coiled coil. The interval 657-845 (NTAILKDKKD…RLKEAEKLFA (189 aa)) is DNA-binding. Ser-676 carries the phosphoserine modification. Polar residues predominate over residues 684 to 703 (FDSKTTPSQNISRISSSMES). A disordered region spans residues 684–709 (FDSKTTPSQNISRISSSMESGKTKDN). Residues 753 to 756 (KKRK) carry the Nuclear localization signal motif. Residues 786–808 (LYNNNSPNSHLTPKQTPLSLSTP) are disordered.

In terms of assembly, structural component of synaptonemal complexes. Homotetramer that consists of an N-terminal four-helical bundle that bifurcates into two elongated C-terminal dimeric coiled coils. This tetrameric building block potentially self-assembles into a supramolecular zipper-like lattice to mediate meiotic chromosome synapsis. Self-assembly is likely initiated by local proton density at chromosome axis, which is predicted to trigger antiparallel back to back assembly of adjacent C-terminal ends into tetrameric structures that anchor to chromosomal DNA. Then the N-terminal ends are predicted to undergo cooperative antiparallel head to head assembly at the midline of synaptonemal complexes central element to form a zipper-like lattice between properly aligned homologous chromosomes. The nascent synapsis generated by SYCP1 is stabilized through interaction with central element proteins SYCE1 and SYCE2. Interacts (via tetrameric core) with SYCE3; the interaction remodels SYCP1 homotetramers to 2:1 heterotrimers with SYCE3. SYCP1/SYCE3 heterotrimers form lattice assemblies as part of the mature synaptonemal complex via both lateral and head-to-head interactions. Forms a complex with EWSR1, PRDM9, SYCP3 and REC8; complex formation is dependent of phosphorylated form of REC8 and requires PRDM9 bound to hotspot DNA; EWSR1 joins PRDM9 with the chromosomal axis through REC8. Interacts with SPO16.

Its subcellular location is the nucleus. It is found in the chromosome. It localises to the centromere. In terms of biological role, major component of the transverse filaments of synaptonemal complexes, formed between homologous chromosomes during meiotic prophase. Required for normal assembly of the central element of the synaptonemal complexes. Required for normal centromere pairing during meiosis. Required for normal meiotic chromosome synapsis during oocyte and spermatocyte development and for normal male and female fertility. This chain is Synaptonemal complex protein 1, found in Mesocricetus auratus (Golden hamster).